A 402-amino-acid chain; its full sequence is 4-hydroxy-3-methylbut-2-enyl diphosphate reductase (402 aa).

Cysteine 66 provides a ligand contact to [4Fe-4S] cluster. (2E)-4-hydroxy-3-methylbut-2-enyl diphosphate is bound at residue histidine 96. Residue histidine 96 coordinates dimethylallyl diphosphate. Histidine 96 is a binding site for isopentenyl diphosphate. Cysteine 157 contacts [4Fe-4S] cluster. (2E)-4-hydroxy-3-methylbut-2-enyl diphosphate is bound at residue histidine 185. Histidine 185 lines the dimethylallyl diphosphate pocket. Isopentenyl diphosphate is bound at residue histidine 185. Glutamate 187 (proton donor) is an active-site residue. Threonine 250 provides a ligand contact to (2E)-4-hydroxy-3-methylbut-2-enyl diphosphate. Cysteine 288 is a binding site for [4Fe-4S] cluster. Residues serine 317, serine 318, asparagine 319, and serine 379 each contribute to the (2E)-4-hydroxy-3-methylbut-2-enyl diphosphate site. Dimethylallyl diphosphate-binding residues include serine 317, serine 318, asparagine 319, and serine 379. Serine 317, serine 318, asparagine 319, and serine 379 together coordinate isopentenyl diphosphate.

Belongs to the IspH family. The cofactor is [4Fe-4S] cluster.

It catalyses the reaction isopentenyl diphosphate + 2 oxidized [2Fe-2S]-[ferredoxin] + H2O = (2E)-4-hydroxy-3-methylbut-2-enyl diphosphate + 2 reduced [2Fe-2S]-[ferredoxin] + 2 H(+). The enzyme catalyses dimethylallyl diphosphate + 2 oxidized [2Fe-2S]-[ferredoxin] + H2O = (2E)-4-hydroxy-3-methylbut-2-enyl diphosphate + 2 reduced [2Fe-2S]-[ferredoxin] + 2 H(+). Its pathway is isoprenoid biosynthesis; dimethylallyl diphosphate biosynthesis; dimethylallyl diphosphate from (2E)-4-hydroxy-3-methylbutenyl diphosphate: step 1/1. The protein operates within isoprenoid biosynthesis; isopentenyl diphosphate biosynthesis via DXP pathway; isopentenyl diphosphate from 1-deoxy-D-xylulose 5-phosphate: step 6/6. In terms of biological role, catalyzes the conversion of 1-hydroxy-2-methyl-2-(E)-butenyl 4-diphosphate (HMBPP) into a mixture of isopentenyl diphosphate (IPP) and dimethylallyl diphosphate (DMAPP). Acts in the terminal step of the DOXP/MEP pathway for isoprenoid precursor biosynthesis. This chain is 4-hydroxy-3-methylbut-2-enyl diphosphate reductase, found in Nostoc sp. (strain PCC 7120 / SAG 25.82 / UTEX 2576).